The following is a 481-amino-acid chain: MIARTKIICTIGPATNTPEMLEKLLDAGMNVARLNFSHGTHESHGRTIAILKELREKRQVPLAIMLDTKGPEIRLGQVESPIKVKPGDRLTLTSKEILGSKEAGVTLYPSCVFPFVRERAPVLIDDGYIQAVVVNAQEHLIEIEFQNSGEIKSNKSLSIKDIDVALPFMTEKDITDLKFGVEQELDLIAASFVRCNEDIDSMRKVLENFGRPNMPIIAKIENHLGVQNFQEIAKASDGIMIARGDLGIELSIVEVPALQKFMARVSRETGRFCITATQMLESMIRNPLPTRAEVSDVANAIHDGTSAVMLSGETASGTYPIEAVKTMRSIIQETEKSFDYQAFFQLNDKNSALKVSPYLEAIGASGIQIAEKASAKAIIVYTQTGGSPMFLSKYRPYLPIIAVTPNRNVYYRLAVEWGVYPMLTSESNRTVWRHQACVYGVEKGILSNYDKILVFSRGAGMQDTNNLTLTTVNDVLSPSLE.

Arg33 serves as a coordination point for substrate. K(+) contacts are provided by Asn35, Ser37, Asp67, and Thr68. Residue 35-38 (NFSH) participates in ATP binding. 2 residues coordinate ATP: Arg74 and Lys155. Glu221 is a Mg(2+) binding site. Residues Gly244, Asp245, and Thr277 each contribute to the substrate site. Residue Asp245 coordinates Mg(2+).

This sequence belongs to the pyruvate kinase family. In terms of assembly, homotetramer. Mg(2+) serves as cofactor. Requires K(+) as cofactor.

It catalyses the reaction pyruvate + ATP = phosphoenolpyruvate + ADP + H(+). The protein operates within carbohydrate degradation; glycolysis; pyruvate from D-glyceraldehyde 3-phosphate: step 5/5. The polypeptide is Pyruvate kinase (pyk) (Chlamydia muridarum (strain MoPn / Nigg)).